A 370-amino-acid chain; its full sequence is MSDLYNEGTEELLLNMGPQHPSMHGVFRMVVRLQGETVTGIEPKIGYLHRGLEKIAESRTYPQFIPYTDRLDYLASPHNNLAYVQTVEKLMGLEIPERAEYLRIILAELARFASHQVFIASAALDMAGWTAWGYPFRDRERILDLFEMMSGSRLTVNCMRIGGVSAEPPAEFWPALESFLDDMPEKLEEYFNIYMGNEIAQARMKKVGILSKEVAENLCITGPALRASGVQYDVRKAEPYGIYDRFDFEVPVLYGCDTYDRNLIRFMEMNESLKIIRQAVRDIPEGPIMAKVPKIIKPPAGEVYHRVENPKGELGFYIVSNGTPKPERVKIRAGAFVNLQCLNEIGVGTYIQDLIASFASLDAVLGEVDK.

This sequence belongs to the complex I 49 kDa subunit family. As to quaternary structure, NDH-1 is composed of 14 different subunits. Subunits NuoB, C, D, E, F, and G constitute the peripheral sector of the complex.

It localises to the cell membrane. It carries out the reaction a quinone + NADH + 5 H(+)(in) = a quinol + NAD(+) + 4 H(+)(out). In terms of biological role, NDH-1 shuttles electrons from NADH, via FMN and iron-sulfur (Fe-S) centers, to quinones in the respiratory chain. The immediate electron acceptor for the enzyme in this species is believed to be a menaquinone. Couples the redox reaction to proton translocation (for every two electrons transferred, four hydrogen ions are translocated across the cytoplasmic membrane), and thus conserves the redox energy in a proton gradient. This Desulfitobacterium hafniense (strain Y51) protein is NADH-quinone oxidoreductase subunit D.